The sequence spans 305 residues: Methionyl-tRNA formyltransferase (305 aa).

110-113 provides a ligand contact to (6S)-5,6,7,8-tetrahydrofolate; that stretch reads SLLP.

It belongs to the Fmt family.

The catalysed reaction is L-methionyl-tRNA(fMet) + (6R)-10-formyltetrahydrofolate = N-formyl-L-methionyl-tRNA(fMet) + (6S)-5,6,7,8-tetrahydrofolate + H(+). Its function is as follows. Attaches a formyl group to the free amino group of methionyl-tRNA(fMet). The formyl group appears to play a dual role in the initiator identity of N-formylmethionyl-tRNA by promoting its recognition by IF2 and preventing the misappropriation of this tRNA by the elongation apparatus. The protein is Methionyl-tRNA formyltransferase of Ureaplasma urealyticum serovar 10 (strain ATCC 33699 / Western).